Reading from the N-terminus, the 607-residue chain is Elongation factor 4 (607 aa).

The 183-residue stretch at 11–193 (EKIRNFSIIA…QIVEKVPAPT (183 aa)) folds into the tr-type G domain. GTP-binding positions include 23–28 (DHGKST) and 140–143 (NKID).

It belongs to the TRAFAC class translation factor GTPase superfamily. Classic translation factor GTPase family. LepA subfamily.

Its subcellular location is the cell membrane. The enzyme catalyses GTP + H2O = GDP + phosphate + H(+). Its function is as follows. Required for accurate and efficient protein synthesis under certain stress conditions. May act as a fidelity factor of the translation reaction, by catalyzing a one-codon backward translocation of tRNAs on improperly translocated ribosomes. Back-translocation proceeds from a post-translocation (POST) complex to a pre-translocation (PRE) complex, thus giving elongation factor G a second chance to translocate the tRNAs correctly. Binds to ribosomes in a GTP-dependent manner. The protein is Elongation factor 4 of Streptococcus gordonii (strain Challis / ATCC 35105 / BCRC 15272 / CH1 / DL1 / V288).